A 450-amino-acid chain; its full sequence is tRNA modification GTPase MnmE (450 aa).

The (6S)-5-formyl-5,6,7,8-tetrahydrofolate site is built by R20, E78, and K117. Residues 211–372 (GLRMVIVGKP…LEESIYRETQ (162 aa)) enclose the TrmE-type G domain. N221 provides a ligand contact to K(+). GTP is bound by residues 221 to 226 (NVGKST), 240 to 246 (TDIPGTT), and 265 to 268 (DTAG). S225 contacts Mg(2+). K(+) is bound by residues T240, I242, and T245. A Mg(2+)-binding site is contributed by T246. K450 contributes to the (6S)-5-formyl-5,6,7,8-tetrahydrofolate binding site.

The protein belongs to the TRAFAC class TrmE-Era-EngA-EngB-Septin-like GTPase superfamily. TrmE GTPase family. As to quaternary structure, homodimer. Heterotetramer of two MnmE and two MnmG subunits. It depends on K(+) as a cofactor.

The protein localises to the cytoplasm. Functionally, exhibits a very high intrinsic GTPase hydrolysis rate. Involved in the addition of a carboxymethylaminomethyl (cmnm) group at the wobble position (U34) of certain tRNAs, forming tRNA-cmnm(5)s(2)U34. The sequence is that of tRNA modification GTPase MnmE from Thermotoga sp. (strain RQ2).